The following is a 125-amino-acid chain: Lectin (125 aa).

The C-type lectin domain occupies 1-120; it reads MDYEILFSDE…CGGARRVICE (120 aa). 2 disulfide bridges follow: Cys21–Cys119 and Cys96–Cys111.

As to quaternary structure, homodimer.

Functionally, role in the defense system of the organism against microorganisms. This calcium-binding lectin binds galactose. This chain is Lectin, found in Polyandrocarpa misakiensis (Tunicate).